Consider the following 999-residue polypeptide: Protein Smaug (999 aa).

The span at 1 to 37 shows a compositional bias: polar residues; it reads MKYATGTDNAMTSGISGQTNNSNSVSNEMQPTTSTPT. 3 disordered regions span residues 1 to 45, 50 to 69, and 321 to 370; these read MKYA…EATS, TATYANGNPNSNANPSQSQP, and CSSV…GSSS. Residues 321-338 show a composition bias toward low complexity; the sequence is CSSVASSSMCPASGSRSS. Ser564 and Ser575 each carry phosphoserine. An interaction with cup region spans residues 583–763; sequence EFKPNYIKFH…KDLKFKLSKM (181 aa). An SAM domain is found at 600 to 654; that stretch reads GIGLWLKSLRLHKYIELFKNMTYEEMLLITEDFLQSVGVTKGASHKLALCIDKLK. Residues 773–892 are disordered; it reads HVKPAGVGPN…HHHAQQMQQM (120 aa). Polar residues-rich tracts occupy residues 801–822 and 854–864; these read KNGSNDRINNRKNSNDMLNFSL and HQPQYKSSSYP. Ser972 is modified (phosphoserine).

Belongs to the SMAUG family. In terms of assembly, interacts with oskar (osk). Binds to the 3'-UTR of nos. Interacts with cup, which in turn recruits eIF4-E, leading to an indirect interaction between smg and eIF4-E that prevents mRNA translation.

The protein localises to the cytoplasm. In terms of biological role, translation regulator that binds to the 3'-UTR of specific mRNAs such as nanos (nos) and prevent their translation. Prevents translation of unlocalized nos in the bulk cytoplasm via the recruitment of cup. In Drosophila yakuba (Fruit fly), this protein is Protein Smaug (smg).